A 782-amino-acid polypeptide reads, in one-letter code: E3 ubiquitin-protein ligase SopA (782 aa).

The Glycyl thioester intermediate role is filled by cysteine 753.

Belongs to the SopA E3 ligase family. In terms of processing, ubiquitinated in the presence of host E1 ubiquitin-activating enzyme, E2 ubiquitin-conjugating enzyme and ubiquitin.

It localises to the secreted. Its subcellular location is the host cell. The catalysed reaction is S-ubiquitinyl-[E2 ubiquitin-conjugating enzyme]-L-cysteine + [acceptor protein]-L-lysine = [E2 ubiquitin-conjugating enzyme]-L-cysteine + N(6)-ubiquitinyl-[acceptor protein]-L-lysine.. Effector proteins function to alter host cell physiology and promote bacterial survival in host tissues. This protein is an E3 ubiquitin ligase that interferes with host's ubiquitination pathway. The chain is E3 ubiquitin-protein ligase SopA (sopA) from Salmonella choleraesuis (strain SC-B67).